The sequence spans 1066 residues: Ankyrin repeat protein nuc-2 (1066 aa).

An SPX domain is found at 1–166; the sequence is MKFGKQIQKR…KSKTKELYLS (166 aa). ANK repeat units follow at residues 268–298, 336–366, 370–399, 403–432, 435–465, 470–499, and 503–532; these read RVTR…DIQS, YGRV…TINL, DNFT…RIDP, TDHV…KILA, EGLY…DLDQ, YGWT…DPNI, and KDLP…EKAA. A GP-PDE domain is found at 717–1048; the sequence is ITDFETYWKA…DPFPKLPKGV (332 aa). Residues 923-963 form a disordered region; the sequence is KQQQQGSCSKGDGDEDMGGTTAASRREAADERTLQSDGRRT. Residues 946–962 show a composition bias toward basic and acidic residues; the sequence is SRREAADERTLQSDGRR.

Functionally, controls phosphorus acquisition. The polypeptide is Ankyrin repeat protein nuc-2 (nuc-2) (Neurospora crassa (strain ATCC 24698 / 74-OR23-1A / CBS 708.71 / DSM 1257 / FGSC 987)).